The sequence spans 355 residues: Endonuclease III homolog (355 aa).

Residues Pro-44–Gln-50 carry the Nuclear localization signal motif. The 28-residue stretch at Phe-122 to Ser-149 folds into the HhH domain. Catalysis depends on Lys-142, which acts as the Nucleophile; for N-glycosylase activity. [4Fe-4S] cluster is bound by residues Cys-210, Cys-217, Cys-220, and Cys-228. Positions Lys-252–Pro-255 match the Nuclear localization signal motif. The segment at Lys-303 to Val-355 is disordered. Positions Lys-338–Gln-349 are enriched in polar residues.

This sequence belongs to the Nth/MutY family. [4Fe-4S] cluster serves as cofactor.

The protein resides in the nucleus. The protein localises to the mitochondrion. It carries out the reaction 2'-deoxyribonucleotide-(2'-deoxyribose 5'-phosphate)-2'-deoxyribonucleotide-DNA = a 3'-end 2'-deoxyribonucleotide-(2,3-dehydro-2,3-deoxyribose 5'-phosphate)-DNA + a 5'-end 5'-phospho-2'-deoxyribonucleoside-DNA + H(+). Functionally, bifunctional DNA N-glycosylase with associated apurinic/apyrimidinic (AP) lyase function that catalyzes the first step in base excision repair (BER), the primary repair pathway for the repair of oxidative DNA damage. The DNA N-glycosylase activity releases the damaged DNA base from DNA by cleaving the N-glycosidic bond, leaving an AP site. The AP-lyase activity cleaves the phosphodiester bond 3' to the AP site by a beta-elimination. Primarily recognizes and repairs oxidative base damage of pyrimidines. Also has 8-oxo-7,8-dihydroguanine (8-oxoG) DNA glycosylase activity. Also involved in the repair of 7-methylguanine lesions, although it cannot directly repair alkylated DNA bases. Probably does so via excision of methylformamidopyrimidine (mFapy) lesions, a spontaneous processing product of 7-methylguanine. The chain is Endonuclease III homolog (nth1) from Schizosaccharomyces pombe (strain 972 / ATCC 24843) (Fission yeast).